A 218-amino-acid chain; its full sequence is Thiopurine S-methyltransferase (218 aa).

Residues tryptophan 10, leucine 45, glutamate 66, and arginine 123 each contribute to the S-adenosyl-L-methionine site.

This sequence belongs to the class I-like SAM-binding methyltransferase superfamily. TPMT family.

Its subcellular location is the cytoplasm. The catalysed reaction is S-adenosyl-L-methionine + a thiopurine = S-adenosyl-L-homocysteine + a thiopurine S-methylether.. The sequence is that of Thiopurine S-methyltransferase from Shewanella sp. (strain W3-18-1).